We begin with the raw amino-acid sequence, 641 residues long: Epithelial sodium channel subunit beta (641 aa).

Residues 1–50 (MHVKKYLLKCLHRLQKGPGYTYKELLVWYCDNTNTHGPKRIIREGPKKKA) lie on the Cytoplasmic side of the membrane. The chain crosses the membrane as a helical span at residues 51 to 71 (MWFLITLLFASLVCWQWGVFI). At 72–533 (KTYLSWEVSV…GGQFGFWMGG (462 aa)) the chain is on the extracellular side. Disulfide bonds link C98–C273, C185–C190, C197–C204, C250–C257, C362–C449, C387–C445, C391–C441, C400–C427, and C402–C416. An N-linked (GlcNAc...) asparagine glycan is attached at N141. N-linked (GlcNAc...) asparagine glycans are attached at residues N261 and N379. The helical transmembrane segment at 534–554 (SVLCLIEFAEIIIDFVWITII) threads the bilayer. Residues 555-641 (KLVALAKGLR…VESDSEGDAV (87 aa)) lie on the Cytoplasmic side of the membrane. Residues 596–641 (GHRSPDAEAYPDEQALPIPGTPPPNYDSLRLQPLDVVESDSEGDAV) are disordered. The PY motif; recruits WW domain-containing proteins and is thereby required for ubiquitination and inhibition of the channel by NEDD4 and NEDD4L signature appears at 617-621 (PPPNY). A compositionally biased stretch (acidic residues) spans 632-641 (VESDSEGDAV). Phosphoserine occurs at positions 634 and 636.

This sequence belongs to the amiloride-sensitive sodium channel (TC 1.A.6) family. SCNN1B subfamily. Component of the heterotrimeric epithelial sodium channel (ENaC) composed of an alpha/SCNN1A, a beta/SCNN1B and a gamma/SCNN1G subunit. Interacts with WWP1 (via WW domains). Interacts with WWP2 (via WW domains); inhibits the channel. Interacts with the full-length immature form of PCSK9 (pro-PCSK9). Interacts (N-glycosylated) with BPIFA1; the interaction is direct and inhibits the proteolytic processing of SCNN1A and SCNN1G and the activation of ENaC. Post-translationally, ubiquitinated. Can be ubiquitinated at multiple sites and undergo monoubiquitination and polyubiquitination. Ubiquitination by NEDD4 or NEDD4L inhibits the ENaC channel through endocytosis, intracellular retention and degradation of its individual subunits. However, some studies could not confirm the ubiquitination of this subunit of the ENaC. In terms of processing, phosphorylated on serine and threonine residues. Aldosterone and insulin increase the basal level of phosphorylation. N-glycosylated. N-glycosylation is required for interaction with BPIFA1.

Its subcellular location is the apical cell membrane. The protein resides in the cytoplasmic vesicle membrane. The catalysed reaction is Na(+)(in) = Na(+)(out). Originally identified and characterized by its inhibition by the diuretic drug amiloride. Functionally, this is one of the three pore-forming subunits of the heterotrimeric epithelial sodium channel (ENaC), a critical regulator of sodium balance and fluid homeostasis. ENaC operates in epithelial tissues, where it mediates the electrodiffusion of sodium ions from extracellular fluid through the apical membrane of cells, with water following osmotically. It plays a key role in maintaining sodium homeostasis through electrogenic sodium reabsorption in the kidneys. Additionally, ENaC is essential for airway surface liquid homeostasis, which is crucial for proper mucus clearance. This is Epithelial sodium channel subunit beta from Oryctolagus cuniculus (Rabbit).